A 267-amino-acid chain; its full sequence is Tryptophan synthase alpha chain (267 aa).

Residues glutamate 49 and aspartate 60 each act as proton acceptor in the active site.

It belongs to the TrpA family. As to quaternary structure, tetramer of two alpha and two beta chains.

The enzyme catalyses (1S,2R)-1-C-(indol-3-yl)glycerol 3-phosphate + L-serine = D-glyceraldehyde 3-phosphate + L-tryptophan + H2O. It participates in amino-acid biosynthesis; L-tryptophan biosynthesis; L-tryptophan from chorismate: step 5/5. Functionally, the alpha subunit is responsible for the aldol cleavage of indoleglycerol phosphate to indole and glyceraldehyde 3-phosphate. The chain is Tryptophan synthase alpha chain from Acidothermus cellulolyticus (strain ATCC 43068 / DSM 8971 / 11B).